The chain runs to 1235 residues: Cullin-associated NEDD8-dissociated protein 2 (1235 aa).

N-acetylserine is present on Ser2. HEAT repeat units follow at residues 2–39 (STGA…KDSI), 44–81 (DSER…KVKE), 83–119 (QVEN…ELPP), 129–167 (NVCR…RLGA), 171–208 (TFHA…ACST), 210–246 (LFVE…SVGR), 254–291 (AHLD…KCPK), 326–367 (TEDS…SRPD), 371–408 (DFHC…HTRP), 431–468 (AQVP…VLPG), 516–553 (PHLP…TLWP), 564–603 (PYVG…HLGD), 607–644 (DDLE…LRLD), 647–684 (PILA…SQGL), 689–726 (PAVR…TQPS), 730–769 (EVSG…TRPP), 771–812 (VEYS…ALSA), 856–893 (GPQR…GNLP), 895–930 (FLPF…DNLK), 932–965 (YVED…LVFV), 966–1002 (NPPY…DQPH), 1006–1043 (PLLK…NKPS), 1047–1083 (DLLD…DDGL), 1104–1140 (LDMC…LCPA), 1156–1193 (TCTA…NPEV), and 1203–1235 (SAQI…MELS). The tract at residues 314–345 (YDHDSDDEEQMETEDSEFSEQESEDEYSDDDD) is disordered. Positions 317-345 (DSDDEEQMETEDSEFSEQESEDEYSDDDD) are enriched in acidic residues.

It belongs to the CAND family. In terms of assembly, binds TBP, CNOT3 and UBE3C. Post-translationally, ubiquitinated and targeted for proteasomal degradation. As to expression, highly expressed in embryonic limb buds.

The protein localises to the nucleus. Functionally, probable assembly factor of SCF (SKP1-CUL1-F-box protein) E3 ubiquitin ligase complexes that promotes the exchange of the substrate-recognition F-box subunit in SCF complexes, thereby playing a key role in the cellular repertoire of SCF complexes. In Mus musculus (Mouse), this protein is Cullin-associated NEDD8-dissociated protein 2 (Cand2).